Reading from the N-terminus, the 685-residue chain is Methionine--tRNA ligase (685 aa).

Residues cysteine 142, cysteine 145, cysteine 155, and cysteine 158 each contribute to the Zn(2+) site. Residues 330-334 (KMSKS) carry the 'KMSKS' region motif. ATP is bound at residue lysine 333. One can recognise a tRNA-binding domain in the interval 584–685 (DFIKVDLRVA…SGAKPGDKVS (102 aa)).

It belongs to the class-I aminoacyl-tRNA synthetase family. MetG type 1 subfamily. In terms of assembly, homodimer. It depends on Zn(2+) as a cofactor.

The protein localises to the cytoplasm. The catalysed reaction is tRNA(Met) + L-methionine + ATP = L-methionyl-tRNA(Met) + AMP + diphosphate. Its function is as follows. Is required not only for elongation of protein synthesis but also for the initiation of all mRNA translation through initiator tRNA(fMet) aminoacylation. This Acinetobacter baylyi (strain ATCC 33305 / BD413 / ADP1) protein is Methionine--tRNA ligase.